A 659-amino-acid chain; its full sequence is 1,4-alpha-glucan branching enzyme GlgB (659 aa).

Positions 1-12 are enriched in basic and acidic residues; that stretch reads MRNCKELKHEKN. The disordered stretch occupies residues 1–25; that stretch reads MRNCKELKHEKNGNVTEKIGKNKGK. The Nucleophile role is filled by D337. Catalysis depends on E390, which acts as the Proton donor.

The protein belongs to the glycosyl hydrolase 13 family. GlgB subfamily. Monomer.

The catalysed reaction is Transfers a segment of a (1-&gt;4)-alpha-D-glucan chain to a primary hydroxy group in a similar glucan chain.. It functions in the pathway glycan biosynthesis; glycogen biosynthesis. Catalyzes the formation of the alpha-1,6-glucosidic linkages in glycogen by scission of a 1,4-alpha-linked oligosaccharide from growing alpha-1,4-glucan chains and the subsequent attachment of the oligosaccharide to the alpha-1,6 position. This is 1,4-alpha-glucan branching enzyme GlgB from Clostridium perfringens (strain ATCC 13124 / DSM 756 / JCM 1290 / NCIMB 6125 / NCTC 8237 / Type A).